Reading from the N-terminus, the 36-residue chain is Trypsin inhibitor 2 (36 aa).

3 disulfide bridges follow: C3–C20, C10–C24, and C19–C35.

Functionally, trypsin inhibitor. The sequence is that of Trypsin inhibitor 2 from Spinacia oleracea (Spinach).